Consider the following 476-residue polypeptide: RNA-splicing ligase RtcB homolog (476 aa).

Mn(2+) is bound by residues Asp90, Cys93, His198, His230, and His324. 197–201 (NHYAE) provides a ligand contact to GMP. GMP-binding positions include 324–325 (HN), 373–376 (GGTM), Ser380, 399–402 (HGAG), and Lys475. The active-site GMP-histidine intermediate is the His399.

This sequence belongs to the RtcB family. Catalytic component of the tRNA-splicing ligase complex. Mn(2+) is required as a cofactor.

The enzyme catalyses a 3'-end 3'-phospho-ribonucleotide-RNA + a 5'-end dephospho-ribonucleoside-RNA + GTP = a ribonucleotidyl-ribonucleotide-RNA + GMP + diphosphate. The catalysed reaction is a 3'-end 2',3'-cyclophospho-ribonucleotide-RNA + a 5'-end dephospho-ribonucleoside-RNA + GTP + H2O = a ribonucleotidyl-ribonucleotide-RNA + GMP + diphosphate + H(+). Functionally, catalytic subunit of the tRNA-splicing ligase complex that acts by directly joining spliced tRNA halves to mature-sized tRNAs by incorporating the precursor-derived splice junction phosphate into the mature tRNA as a canonical 3',5'-phosphodiester. May act as an RNA ligase with broad substrate specificity, and may function toward other RNAs. The protein is RNA-splicing ligase RtcB homolog of Chlamydomonas reinhardtii (Chlamydomonas smithii).